The following is a 700-amino-acid chain: Elongation factor G (700 aa).

The tr-type G domain maps to 10-286; it reads TKVRNIGIMA…AVVDYLPSPL (277 aa). Residues 19–26, 83–87, and 137–140 each bind GTP; these read AHIDAGKT, DTPGH, and NKMD.

The protein belongs to the TRAFAC class translation factor GTPase superfamily. Classic translation factor GTPase family. EF-G/EF-2 subfamily.

It localises to the cytoplasm. In terms of biological role, catalyzes the GTP-dependent ribosomal translocation step during translation elongation. During this step, the ribosome changes from the pre-translocational (PRE) to the post-translocational (POST) state as the newly formed A-site-bound peptidyl-tRNA and P-site-bound deacylated tRNA move to the P and E sites, respectively. Catalyzes the coordinated movement of the two tRNA molecules, the mRNA and conformational changes in the ribosome. The polypeptide is Elongation factor G (Saccharopolyspora erythraea (strain ATCC 11635 / DSM 40517 / JCM 4748 / NBRC 13426 / NCIMB 8594 / NRRL 2338)).